Here is a 95-residue protein sequence, read N- to C-terminus: Sec-independent protein translocase protein TatA (95 aa).

A helical membrane pass occupies residues 1–21 (MGSMSVWHWVIVAVVVMLLFG). Positions 42–95 (GMADDETQPNTATSVPPVGPNDPVRTLPHQGAPGTAPQPPHVQPHVSAGDHKAV) are disordered.

The protein belongs to the TatA/E family. The Tat system comprises two distinct complexes: a TatABC complex, containing multiple copies of TatA, TatB and TatC subunits, and a separate TatA complex, containing only TatA subunits. Substrates initially bind to the TatABC complex, which probably triggers association of the separate TatA complex to form the active translocon.

Its subcellular location is the cell inner membrane. Its function is as follows. Part of the twin-arginine translocation (Tat) system that transports large folded proteins containing a characteristic twin-arginine motif in their signal peptide across membranes. TatA could form the protein-conducting channel of the Tat system. This chain is Sec-independent protein translocase protein TatA, found in Methylorubrum extorquens (strain CM4 / NCIMB 13688) (Methylobacterium extorquens).